Consider the following 430-residue polypeptide: Histidinol dehydrogenase (430 aa).

Positions 130, 191, and 214 each coordinate NAD(+). The substrate site is built by Ser-237, Gln-259, and His-262. Gln-259 and His-262 together coordinate Zn(2+). Active-site proton acceptor residues include Glu-327 and His-328. Substrate-binding residues include His-328, Asp-361, Glu-415, and His-420. Asp-361 contacts Zn(2+). His-420 contributes to the Zn(2+) binding site.

It belongs to the histidinol dehydrogenase family. Requires Zn(2+) as cofactor.

It carries out the reaction L-histidinol + 2 NAD(+) + H2O = L-histidine + 2 NADH + 3 H(+). It participates in amino-acid biosynthesis; L-histidine biosynthesis; L-histidine from 5-phospho-alpha-D-ribose 1-diphosphate: step 9/9. In terms of biological role, catalyzes the sequential NAD-dependent oxidations of L-histidinol to L-histidinaldehyde and then to L-histidine. The protein is Histidinol dehydrogenase of Brucella melitensis biotype 1 (strain ATCC 23456 / CCUG 17765 / NCTC 10094 / 16M).